The primary structure comprises 371 residues: Leu/Ile/Val-binding protein homolog 1 (371 aa).

The first 23 residues, 1-23 (MRKTLFSGVALAAVIAFGGSAWA), serve as a signal peptide directing secretion.

The protein belongs to the leucine-binding protein family.

Its function is as follows. Component of an amino-acid transport system. This is Leu/Ile/Val-binding protein homolog 1 from Brucella abortus (strain 2308).